Consider the following 229-residue polypeptide: Putative N-acetylmannosamine-6-phosphate 2-epimerase (229 aa).

Belongs to the NanE family.

The enzyme catalyses an N-acyl-D-glucosamine 6-phosphate = an N-acyl-D-mannosamine 6-phosphate. Its pathway is amino-sugar metabolism; N-acetylneuraminate degradation; D-fructose 6-phosphate from N-acetylneuraminate: step 3/5. In terms of biological role, converts N-acetylmannosamine-6-phosphate (ManNAc-6-P) to N-acetylglucosamine-6-phosphate (GlcNAc-6-P). The sequence is that of Putative N-acetylmannosamine-6-phosphate 2-epimerase from Pediococcus pentosaceus (strain ATCC 25745 / CCUG 21536 / LMG 10740 / 183-1w).